Consider the following 181-residue polypeptide: K99 fimbrial protein (181 aa).

The signal sequence occupies residues 1–22 (MKKTLLAIILGGMAFATTNASA). A disulfide bond links cysteine 38 and cysteine 79.

Belongs to the fimbrial protein family.

It is found in the fimbrium. Functionally, fimbriae (also called pili), polar filaments radiating from the surface of the bacterium to a length of 0.5-1.5 micrometers and numbering 100-300 per cell, enable bacteria to colonize the epithelium of specific host organs. Its function is as follows. FanC is the main component of the K99 fimbriae. The protein is K99 fimbrial protein (fanC) of Escherichia coli.